We begin with the raw amino-acid sequence, 334 residues long: Holliday junction branch migration complex subunit RuvB (334 aa).

The tract at residues 1-179 (MTHKISVLHQ…FAFTGRVDYY (179 aa)) is large ATPase domain (RuvB-L). Residues Leu-18, Arg-19, Gly-60, Lys-63, Thr-64, Ser-65, 126-128 (EDF), Arg-169, Tyr-179, and Arg-216 each bind ATP. Thr-64 serves as a coordination point for Mg(2+). The segment at 180 to 250 (TDEDLVSILS…VAEKALAMLL (71 aa)) is small ATPAse domain (RuvB-S). A head domain (RuvB-H) region spans residues 253 to 334 (NLGLNEIDIK…RNPKDRWGEE (82 aa)). Residues Arg-308 and Arg-313 each contribute to the DNA site.

Belongs to the RuvB family. In terms of assembly, homohexamer. Forms an RuvA(8)-RuvB(12)-Holliday junction (HJ) complex. HJ DNA is sandwiched between 2 RuvA tetramers; dsDNA enters through RuvA and exits via RuvB. An RuvB hexamer assembles on each DNA strand where it exits the tetramer. Each RuvB hexamer is contacted by two RuvA subunits (via domain III) on 2 adjacent RuvB subunits; this complex drives branch migration. In the full resolvosome a probable DNA-RuvA(4)-RuvB(12)-RuvC(2) complex forms which resolves the HJ.

The protein localises to the cytoplasm. The catalysed reaction is ATP + H2O = ADP + phosphate + H(+). Its function is as follows. The RuvA-RuvB-RuvC complex processes Holliday junction (HJ) DNA during genetic recombination and DNA repair, while the RuvA-RuvB complex plays an important role in the rescue of blocked DNA replication forks via replication fork reversal (RFR). RuvA specifically binds to HJ cruciform DNA, conferring on it an open structure. The RuvB hexamer acts as an ATP-dependent pump, pulling dsDNA into and through the RuvAB complex. RuvB forms 2 homohexamers on either side of HJ DNA bound by 1 or 2 RuvA tetramers; 4 subunits per hexamer contact DNA at a time. Coordinated motions by a converter formed by DNA-disengaged RuvB subunits stimulates ATP hydrolysis and nucleotide exchange. Immobilization of the converter enables RuvB to convert the ATP-contained energy into a lever motion, pulling 2 nucleotides of DNA out of the RuvA tetramer per ATP hydrolyzed, thus driving DNA branch migration. The RuvB motors rotate together with the DNA substrate, which together with the progressing nucleotide cycle form the mechanistic basis for DNA recombination by continuous HJ branch migration. Branch migration allows RuvC to scan DNA until it finds its consensus sequence, where it cleaves and resolves cruciform DNA. The polypeptide is Holliday junction branch migration complex subunit RuvB (Chlamydia trachomatis serovar L2 (strain ATCC VR-902B / DSM 19102 / 434/Bu)).